Reading from the N-terminus, the 384-residue chain is F-box/kelch-repeat protein At1g64840 (384 aa).

The F-box domain occupies 3–51 (PNWSQLPEELLNLISKNLDNCFDVVHARSICRSWRSAFPFPSSLSTLSY). Kelch repeat units lie at residues 87–137 (PEYF…PLGF) and 259–309 (NPFP…CCSA).

This Arabidopsis thaliana (Mouse-ear cress) protein is F-box/kelch-repeat protein At1g64840.